A 262-amino-acid chain; its full sequence is Phosphate import ATP-binding protein PstB (262 aa).

The region spanning Ala15 to Ile257 is the ABC transporter domain. Residue Gly47–Ser54 participates in ATP binding.

It belongs to the ABC transporter superfamily. Phosphate importer (TC 3.A.1.7) family. As to quaternary structure, the complex is composed of two ATP-binding proteins (PstB), two transmembrane proteins (PstC and PstA) and a solute-binding protein (PstS).

The protein resides in the cell inner membrane. It carries out the reaction phosphate(out) + ATP + H2O = ADP + 2 phosphate(in) + H(+). Functionally, part of the ABC transporter complex PstSACB involved in phosphate import. Responsible for energy coupling to the transport system. This chain is Phosphate import ATP-binding protein PstB, found in Wolinella succinogenes (strain ATCC 29543 / DSM 1740 / CCUG 13145 / JCM 31913 / LMG 7466 / NCTC 11488 / FDC 602W) (Vibrio succinogenes).